A 511-amino-acid chain; its full sequence is 2,3-bisphosphoglycerate-independent phosphoglycerate mutase (511 aa).

Position 12 (D12) interacts with Mn(2+). Y36 bears the Phosphotyrosine mark. S62 is a Mn(2+) binding site. S62 acts as the Phosphoserine intermediate in catalysis. Substrate is bound by residues H123, R153 to D154, R185, R191, R261 to R264, and K336. Mn(2+) contacts are provided by D403, H407, D444, H445, and H462.

It belongs to the BPG-independent phosphoglycerate mutase family. Monomer. Mn(2+) serves as cofactor.

It carries out the reaction (2R)-2-phosphoglycerate = (2R)-3-phosphoglycerate. It participates in carbohydrate degradation; glycolysis; pyruvate from D-glyceraldehyde 3-phosphate: step 3/5. In terms of biological role, essential for rapid growth and for sporulation. Catalyzes the interconversion of 2-phosphoglycerate and 3-phosphoglycerate. The protein is 2,3-bisphosphoglycerate-independent phosphoglycerate mutase of Bacillus licheniformis (strain ATCC 14580 / DSM 13 / JCM 2505 / CCUG 7422 / NBRC 12200 / NCIMB 9375 / NCTC 10341 / NRRL NRS-1264 / Gibson 46).